The chain runs to 279 residues: GTP cyclohydrolase MptA (279 aa).

This sequence belongs to the GTP cyclohydrolase IV family. Homodimer. Fe(2+) is required as a cofactor.

The catalysed reaction is GTP + H2O = 7,8-dihydroneopterin 2',3'-cyclic phosphate + formate + diphosphate + H(+). Its pathway is cofactor biosynthesis; 5,6,7,8-tetrahydromethanopterin biosynthesis. In terms of biological role, converts GTP to 7,8-dihydro-D-neopterin 2',3'-cyclic phosphate, the first intermediate in the biosynthesis of coenzyme methanopterin. The polypeptide is GTP cyclohydrolase MptA (Korarchaeum cryptofilum (strain OPF8)).